The following is a 400-amino-acid chain: MYIKTLTVSDINRYIKKTLDNDFILGNCSVKGEVSNFKFHSSGHMYFSLKDKFSKINCIMFKSSVEKLNFMPGDGMKVIVKGRISLYEKEGVYQLYCSEMKPDGMGELYLAFEKLKIELEKKGLFDISHKKKIPLYAKKIGVITSPTGAAVKDIINVTRRRNKKIELLIYPSLVQGTGASDNIIKGIETFNSMEDVELIIIARGGGSIEELWCFNDEKLAEAVYSSKKPIITGVGHEIDYTIVDFVSDMRAPTPSAAAEIGVFSLEEYVQKILNYKNKLYNSVKNTVNDKKNRLAFVKKTLEVNNPLTYIANEYENIDKIKESLNFKIKVIINGKKEKLGKINALLSAHNPLNILNKGYCIIEDEQKNVISSIEELNKKYKVDIIMKDGTSKVELIHYKK.

It belongs to the XseA family. In terms of assembly, heterooligomer composed of large and small subunits.

The protein localises to the cytoplasm. The catalysed reaction is Exonucleolytic cleavage in either 5'- to 3'- or 3'- to 5'-direction to yield nucleoside 5'-phosphates.. Its function is as follows. Bidirectionally degrades single-stranded DNA into large acid-insoluble oligonucleotides, which are then degraded further into small acid-soluble oligonucleotides. The chain is Exodeoxyribonuclease 7 large subunit from Clostridium kluyveri (strain NBRC 12016).